A 494-amino-acid polypeptide reads, in one-letter code: Keratin, type I cytoskeletal 12 (494 aa).

Residues 1-12 show a composition bias toward polar residues; that stretch reads MDLSNNTMSLSV. Residues 1–32 form a disordered region; it reads MDLSNNTMSLSVRTPGLSRRLSSQSVIGRPRG. The segment at 1–124 is head; the sequence is MDLSNNTMSL…GNDGGLLSGS (124 aa). Positions 125–160 are coil 1A; that stretch reads EKETMQNLNDRLASYLDKVRALEEANTELENKIREW. Residues 125 to 440 enclose the IF rod domain; sequence EKETMQNLND…RLLDGEAQGD (316 aa). A linker 1 region spans residues 164–182; sequence RGTGTADASQSDYSKYYPL. Positions 183–274 are coil 1B; it reads IEDLRNKIIS…KNHEDELQSF (92 aa). Residues 275–297 are linker 12; sequence RVGGPGEVSVEMDAAPGVDLTRL. A coil 2 region spans residues 298-435; that stretch reads LNDMRAQYET…IETYRRLLDG (138 aa). Positions 436–494 are tail; the sequence is EAQGDGLEESLFVTDSKSQAQSTDSSKDPTKTRKIKTVVQEMVNGEVVSSQVQEIEELM. Residues 446-468 form a disordered region; it reads LFVTDSKSQAQSTDSSKDPTKTR. Positions 448–459 are enriched in polar residues; the sequence is VTDSKSQAQSTD.

Belongs to the intermediate filament family. In terms of assembly, heterotetramer of two type I and two type II keratins. Keratin-3 associates with keratin-12. Expressed in the corneal epithelium (at protein level).

Its function is as follows. Involved in corneal epithelium organization, integrity and corneal keratin expression. This chain is Keratin, type I cytoskeletal 12 (KRT12), found in Homo sapiens (Human).